The following is a 483-amino-acid chain: MSVQFSSQTFSSRSAAFPRRGGQGRLSSVSSRAGSVSQMGGFGSSSLYGLGSGRPRVSVGFRSAYGGSSGGGFGARGAGLQEVTINQSLLAPLNLEIDPQIQQVRKEEREQIKTLNNKFASFIDKVRFLEQQNQMLETKWRLLQEQKSSKGSSLPAIFEAHIANLRRQLDGLQGDRGRLEGELKNMQDVVEDFKNKYEGEINKRTAAENEFVVLKKDVDNAYMNKVELEAKVDGLTDEINFLRTLYEMELNELQTQISDTSVVLSMDNSRSLDLDSIISEVKAQYEDIANRSRAEAEYQYQIKFETLQAQAGKHGEDLRSTRNEISEMNRAIQRLQAEIDNVKNQRTKLEASIAEAEERGELALKDARAKQEELEAALQRSKQERARQVREYQDLLNVKLALDIEIATYRKLLEGEESRLSGDGVGAVNISVVNSVGGSLGGGVSLGGTMGGNALGFSSGTGSTIFKTYSTRTTSSSRRSVRN.

Ser2 carries the N-acetylserine modification. Phosphoserine occurs at positions 2, 6, and 7. The segment at Ser2 to Glu107 is head. Residue Ser12 is glycosylated (O-linked (GlcNAc) serine). The segment at Ser14 to Ser37 is disordered. Position 20 is a dimethylated arginine; alternate (Arg20). Residue Arg20 is modified to Omega-N-methylarginine; alternate. Residues Arg25–Ser37 show a composition bias toward low complexity. Residues Ser63 and Ser88 each carry the phosphoserine modification. The interval Glu107 to Leu143 is coil 1A. Residues Glu108–Leu420 form the IF rod domain. The residue at position 114 (Thr114) is a Phosphothreonine. Residues Gln144–His161 are linker 1. Residue Lys147 forms a Glycyl lysine isopeptide (Lys-Gly) (interchain with G-Cter in SUMO2) linkage. The tract at residues Ile162–Leu253 is coil 1B. Lys196 is subject to N6-acetyllysine. The interval Gln254–Ile277 is linker 12. Residues Ser269 and Ser271 each carry the phosphoserine modification. Residues Ile278–Glu416 are coil 2. Residues Lys282 and Lys303 each participate in a glycyl lysine isopeptide (Lys-Gly) (interchain with G-Cter in SUMO2) cross-link. Thr306 is subject to Phosphothreonine. Residues Lys313 and Lys348 each participate in a glycyl lysine isopeptide (Lys-Gly) (interchain with G-Cter in SUMO2) cross-link. The segment at Glu417–Asn483 is tail.

The protein belongs to the intermediate filament family. Heterotetramer of two type I and two type II keratins. Interacts with eukaryotic translation initiator factor 3 (eIF3) subunit EIF3S10. Interacts with GPER1. Arg-20 is dimethylated, probably to asymmetric dimethylarginine.

Blocks interferon-dependent interphase and stimulates DNA synthesis in cells. In Potorous tridactylus (Potoroo), this protein is Keratin, type II cytoskeletal 7.